A 363-amino-acid chain; its full sequence is D-alanine--D-alanine ligase (363 aa).

An ATP-grasp domain is found at 146–352 (KLCAADAGVA…FTALIDKLLH (207 aa)). 179 to 234 (DSTFGYPLFVKPASLGSSVGISKVHLPAALPEALKVACSYDRKILVEAAVSGKEIE) is an ATP binding site. Mg(2+) contacts are provided by aspartate 305, glutamate 319, and asparagine 321.

It belongs to the D-alanine--D-alanine ligase family. Mg(2+) is required as a cofactor. Requires Mn(2+) as cofactor.

It localises to the cytoplasm. The enzyme catalyses 2 D-alanine + ATP = D-alanyl-D-alanine + ADP + phosphate + H(+). The protein operates within cell wall biogenesis; peptidoglycan biosynthesis. In terms of biological role, cell wall formation. The sequence is that of D-alanine--D-alanine ligase from Chlorobium limicola (strain DSM 245 / NBRC 103803 / 6330).